The sequence spans 234 residues: MDSVRPLWLMLLSLLLVGTALGDASQAPPGNNAEICLLPPDDGPCRARIPSYYYDRYTQSCREFMYGGCEGNANNFETLEACNEACWKIEKVPKICRLKVNKKQCGELREQYFFNLSSMTCKKFISGGCHSNENRFPDEATCMDFCAPKRAPVFCYSPKDEGLCSANVTRYYFNPRHKACEAFNYTGCGGNDNNFVNLKDCKRTCVKALKKEKNKKMPRLLLANRRLKIKKKQF.

The first 22 residues, 1 to 22 (MDSVRPLWLMLLSLLLVGTALG), serve as a signal peptide directing secretion. BPTI/Kunitz inhibitor domains follow at residues 36–86 (CLLP…NEAC), 96–146 (CRLK…MDFC), and 155–205 (CYSP…KRTC). 9 disulfide bridges follow: cysteine 36-cysteine 86, cysteine 45-cysteine 69, cysteine 61-cysteine 82, cysteine 96-cysteine 146, cysteine 105-cysteine 129, cysteine 121-cysteine 142, cysteine 155-cysteine 205, cysteine 164-cysteine 188, and cysteine 180-cysteine 201. The N-linked (GlcNAc...) asparagine glycan is linked to asparagine 115. Residues asparagine 167 and asparagine 184 are each glycosylated (N-linked (GlcNAc...) asparagine).

As to quaternary structure, finds in a complex with ABCB1, TFPI2 and PPP2R3C; leading to the dephosphorylation of ABCB1.

Its subcellular location is the secreted. In terms of biological role, may play a role in the regulation of plasmin-mediated matrix remodeling. Inhibits trypsin, plasmin, factor VIIa/tissue factor and weakly factor Xa. Has no effect on thrombin. The chain is Tissue factor pathway inhibitor 2 (TFPI2) from Bos taurus (Bovine).